The following is a 449-amino-acid chain: Probable glycine dehydrogenase (decarboxylating) subunit 1 (449 aa).

This sequence belongs to the GcvP family. N-terminal subunit subfamily. In terms of assembly, the glycine cleavage system is composed of four proteins: P, T, L and H. In this organism, the P 'protein' is a heterodimer of two subunits.

It catalyses the reaction N(6)-[(R)-lipoyl]-L-lysyl-[glycine-cleavage complex H protein] + glycine + H(+) = N(6)-[(R)-S(8)-aminomethyldihydrolipoyl]-L-lysyl-[glycine-cleavage complex H protein] + CO2. In terms of biological role, the glycine cleavage system catalyzes the degradation of glycine. The P protein binds the alpha-amino group of glycine through its pyridoxal phosphate cofactor; CO(2) is released and the remaining methylamine moiety is then transferred to the lipoamide cofactor of the H protein. This is Probable glycine dehydrogenase (decarboxylating) subunit 1 from Rhodospirillum centenum (strain ATCC 51521 / SW).